Reading from the N-terminus, the 368-residue chain is Agmatine deiminase (368 aa).

Cys-357 acts as the Amidino-cysteine intermediate in catalysis.

The protein belongs to the agmatine deiminase family. Homodimer.

It catalyses the reaction agmatine + H2O = N-carbamoylputrescine + NH4(+). It participates in amine and polyamine biosynthesis; putrescine biosynthesis via agmatine pathway; N-carbamoylputrescine from agmatine: step 1/1. Functionally, mediates the hydrolysis of agmatine into N-carbamoylputrescine in the arginine decarboxylase (ADC) pathway of putrescine biosynthesis, a basic polyamine. This chain is Agmatine deiminase, found in Pseudomonas syringae pv. tomato (strain ATCC BAA-871 / DC3000).